We begin with the raw amino-acid sequence, 255 residues long: 7alpha-hydroxysteroid dehydrogenase (255 aa).

NAD(+)-binding positions include Ile23, 42–43 (DI), 68–69 (DI), and Asn95. Gly99, Ser146, Asn151, and Tyr159 together coordinate glycochenodeoxycholate. Residues Tyr159, Lys163, and 192 to 194 (ILT) each bind NAD(+). The active-site Proton acceptor is the Tyr159.

The protein belongs to the short-chain dehydrogenases/reductases (SDR) family. In terms of assembly, homotetramer.

It carries out the reaction cholate + NAD(+) = 3alpha,12alpha-dihydroxy-7-oxo-5beta-cholanate + NADH + H(+). The enzyme catalyses chenodeoxycholate + NAD(+) = 7-oxolithocholate + NADH + H(+). The catalysed reaction is taurochenodeoxycholate + NAD(+) = 7-oxotaurolithocholate + NADH + H(+). It catalyses the reaction taurocholate + NAD(+) = 7-oxo-taurodeoxycholate + NADH + H(+). It carries out the reaction glycocholate + NAD(+) = 7-oxo-glycodeoxycholate + NADH + H(+). The enzyme catalyses glycochenodeoxycholate + NAD(+) = 7-oxoglycolithocholate + NADH + H(+). Its function is as follows. 7alpha-hydroxysteroid dehydrogenase involved in the metabolism of bile acids. Catalyzes the NAD(+)-dependent oxidation of the 7alpha-hydroxy group of 7alpha-hydroxysteroids, such as the major human bile acids cholate and chenodeoxycholate, to the corresponding 7-oxosteroids. To a lesser extent, can also act on taurochenodeoxycholate, taurocholate and glycocholate. Can also use glycochenodeoxycholate as substrate. Is not able to use NADP(+) instead of NAD(+) as the electron acceptor. This is 7alpha-hydroxysteroid dehydrogenase (hdhA) from Escherichia coli O157:H7.